Here is a 100-residue protein sequence, read N- to C-terminus: Cell division topological specificity factor (100 aa).

It belongs to the MinE family.

In terms of biological role, prevents the cell division inhibition by proteins MinC and MinD at internal division sites while permitting inhibition at polar sites. This ensures cell division at the proper site by restricting the formation of a division septum at the midpoint of the long axis of the cell. This is Cell division topological specificity factor from Synechococcus sp. (strain JA-2-3B'a(2-13)) (Cyanobacteria bacterium Yellowstone B-Prime).